Reading from the N-terminus, the 154-residue chain is Large ribosomal subunit protein uL15 (154 aa).

Basic and acidic residues predominate over residues 1 to 13 (MKLNELRDHEGAT). The segment at 1–44 (MKLNELRDHEGATKNRKRIGRGIGSGTGKTGGCGVKGQKSRSGV) is disordered. Positions 21–35 (RGIGSGTGKTGGCGV) are enriched in gly residues.

The protein belongs to the universal ribosomal protein uL15 family. As to quaternary structure, part of the 50S ribosomal subunit.

Its function is as follows. Binds to the 23S rRNA. This Bartonella bacilliformis (strain ATCC 35685 / KC583 / Herrer 020/F12,63) protein is Large ribosomal subunit protein uL15.